Here is a 4095-residue protein sequence, read N- to C-terminus: Protein adenylyltransferase and cysteine protease IbpA (4095 aa).

Residues 1-97 form the signal peptide; the sequence is MNKNCYKLIF…MVAAPNFAQS (97 aa). Binds bovine IgG2 Fc stretches follow at residues 972-1515 and 1116-1255; these read SERI…FVKA and SEVQ…FLKE. 5 disordered regions span residues 1082-1117, 1130-1154, 1204-1223, 1625-1652, and 1705-1732; these read EVSD…LPSE, KEKA…LQSD, QEAL…AKAK, TVSH…TGFT, and EEDE…QKEE. A compositionally biased stretch (acidic residues) spans 1087-1096; that stretch reads WERDPDEPDE. Basic and acidic residues-rich tracts occupy residues 1097-1117 and 1130-1139; these read PDYK…LPSE and KEKAQQKRQA. Residues 1116–1247 adopt a coiled-coil conformation; the sequence is SEVQDKLRQK…AKDHQIEEAL (132 aa). A compositionally biased stretch (low complexity) spans 1716–1727; it reads KAKAAPDATDNA. Repeat copies occupy residues 2250-2271, 2272-2295, 2296-2317, 2318-2343, 2344-2365, 2366-2387, 2388-2413, 2414-2435, 2436-2457, 2458-2483, 2484-2505, and 2506-2527. The tract at residues 2250–2527 is 12 X 22 AA approximate repeats; the sequence is YSTLGDQNAN…RTLGGESDSP (278 aa). Composition is skewed to polar residues over residues 2592 to 2611 and 2794 to 2803; these read SDTE…TRNA and TAPQKTSPVK. Disordered regions lie at residues 2592–2617, 2765–2809, 2825–2894, 2914–2933, 2943–3033, and 3049–3069; these read SDTE…PLPP, TIGE…SAEG, AKGQ…SPKR, LKSK…EPIY, LARA…KSED, and NKSQ…PNYD. Over residues 2880-2889 the composition is skewed to low complexity; it reads PFPSEFSSEP. Composition is skewed to polar residues over residues 2977–2996 and 3005–3018; these read SNLS…QSVA and AESN…QKLQ. Residues 3052–3062 are compositionally biased toward basic and acidic residues; sequence QAKEAKSEQET. One can recognise a Fido 1 domain in the interval 3218 to 3355; the sequence is LTVEMIEKLN…AEVVKEFLTE (138 aa). The segment at 3222-4095 is yopT-like; that stretch reads MIEKLNHGLR…FNVVNYKKNN (874 aa). A binds bovine IgG2 Fc region spans residues 3354–3698; that stretch reads TELGKKSSPQ…VDFINRAKNE (345 aa). Disordered regions lie at residues 3357-3415 and 3432-3454; these read GKKS…PSVP and AELK…ATGV. Composition is skewed to polar residues over residues 3360–3379 and 3388–3401; these read SSPQ…SPVT and VENT…TIKQ. A compositionally biased stretch (basic and acidic residues) spans 3443–3454; it reads KAAEKSEGATGV. The interval 3535-3557 is arm region; it reads IPEATVKQMSHLPEFDDILTEGA. In terms of domain architecture, Fido 2 spans 3640-3777; it reads LTVQMIENLN…SEVVVEFLKE (138 aa). ATP contacts are provided by residues 3670-3671, 3722-3724, Arg3728, and Gln3757; these read KE and GNG. A compositionally biased stretch (basic and acidic residues) spans 3783 to 3798; sequence SKEDNEQNLEKTDRTS. The segment at 3783-3829 is disordered; it reads SKEDNEQNLEKTDRTSTDLTESAVENSAALSSGTVRSATVSETVTET. Over residues 3799-3815 the composition is skewed to polar residues; that stretch reads TDLTESAVENSAALSSG. The segment covering 3816–3829 has biased composition (low complexity); it reads TVRSATVSETVTET. Active-site for cysteine protease activity residues include Cys3910, His4033, and Asp4048.

In the central section; belongs to the fic family. This sequence in the C-terminal section; belongs to the peptidase C58 family. As to quaternary structure, immunoglobulin-binding protein. The long form of the protein is probably processed, and/or the transcript may be subject to differential translational initiation.

It is found in the secreted. It localises to the cell outer membrane. It carries out the reaction L-tyrosyl-[protein] + ATP = O-(5'-adenylyl)-L-tyrosyl-[protein] + diphosphate. It catalyses the reaction L-threonyl-[protein] + ATP = 3-O-(5'-adenylyl)-L-threonyl-[protein] + diphosphate. Adenylyltransferase involved in virulence by mediating the addition of adenosine 5'-monophosphate (AMP) to specific tyrosine residue of host Rho GTPases RhoA, Rac and Cdc42. The resulting AMPylation inactivates Rho GTPases, thereby inhibiting actin assembly in infected cells. Probably also acts as a cysteine protease, which may play a central role after invasion of host cell and in virulence. Possible member (with IbpB) of a 2 partner secretion. Probably able to bind bovine epithelial cells (host cells). May participate in the formation of fibrils at the surface of the bacteria. The protein is Protein adenylyltransferase and cysteine protease IbpA (ibpA) of Histophilus somni (strain 2336) (Haemophilus somnus).